The chain runs to 354 residues: Probable protein phosphatase 2C 27 (354 aa).

The PPM-type phosphatase domain occupies 54–319 (RSGDWSDIGG…DNLTAVMVSF (266 aa)). Positions 98, 99, 267, and 310 each coordinate Mn(2+).

Belongs to the PP2C family. It depends on Mg(2+) as a cofactor. The cofactor is Mn(2+).

The enzyme catalyses O-phospho-L-seryl-[protein] + H2O = L-seryl-[protein] + phosphate. It carries out the reaction O-phospho-L-threonyl-[protein] + H2O = L-threonyl-[protein] + phosphate. In Oryza sativa subsp. japonica (Rice), this protein is Probable protein phosphatase 2C 27.